We begin with the raw amino-acid sequence, 360 residues long: Ribosomal RNA large subunit methyltransferase F (360 aa).

A disordered region spans residues 1–36 (MSKLISKQGKRPALSQSGLAKPSTSKKSSASKNANT). The span at 23–36 (STSKKSSASKNANT) shows a compositional bias: low complexity.

It belongs to the methyltransferase superfamily. METTL16/RlmF family.

The protein localises to the cytoplasm. The enzyme catalyses adenosine(1618) in 23S rRNA + S-adenosyl-L-methionine = N(6)-methyladenosine(1618) in 23S rRNA + S-adenosyl-L-homocysteine + H(+). In terms of biological role, specifically methylates the adenine in position 1618 of 23S rRNA. The sequence is that of Ribosomal RNA large subunit methyltransferase F from Shewanella denitrificans (strain OS217 / ATCC BAA-1090 / DSM 15013).